The chain runs to 384 residues: Actin-related protein 2/3 complex subunit 1 (384 aa).

5 WD repeats span residues 61–99, 105–146, 151–190, 212–251, and 349–383; these read DHDK…TYKP, RINR…WVSK, PIKS…LDSK, YQGS…QSVN, and AHEN…VIYT.

Belongs to the WD repeat ARPC1 family. In terms of assembly, component of the Arp2/3 complex composed of ARP2, ARP3, ARC40/p41-ARC, ARC35/p34-ARC, ARC18/p21-ARC, ARC19/p20-ARC and ARC16/p16-ARC.

The protein localises to the cytoplasm. Its subcellular location is the cytoskeleton. It is found in the actin patch. Its function is as follows. Functions as a component of the Arp2/3 complex which is involved in regulation of actin polymerization and together with an activating nucleation-promoting factor (NPF) mediates the formation of branched actin networks. This is Actin-related protein 2/3 complex subunit 1 (ARC40) from Saccharomyces cerevisiae (strain ATCC 204508 / S288c) (Baker's yeast).